The primary structure comprises 421 residues: Thymidine phosphorylase (421 aa).

Belongs to the thymidine/pyrimidine-nucleoside phosphorylase family. As to quaternary structure, homodimer.

The enzyme catalyses thymidine + phosphate = 2-deoxy-alpha-D-ribose 1-phosphate + thymine. In terms of biological role, the enzymes which catalyze the reversible phosphorolysis of pyrimidine nucleosides are involved in the degradation of these compounds and in their utilization as carbon and energy sources, or in the rescue of pyrimidine bases for nucleotide synthesis. This chain is Thymidine phosphorylase (deoA), found in Mycoplasma pneumoniae (strain ATCC 29342 / M129 / Subtype 1) (Mycoplasmoides pneumoniae).